The sequence spans 194 residues: Ion-translocating oxidoreductase complex subunit B (194 aa).

The interval 1–26 (MSSILIAVIAIAALALVFGLILGFAS) is hydrophobic. Residues 32-90 (ESDPIVEQIDAILPQTQCGQCGYPGCKPYAEAIANGDMINKCPPGGQATIEKLADLMGV) enclose the 4Fe-4S domain. Residues cysteine 49, cysteine 52, cysteine 57, cysteine 73, cysteine 114, cysteine 117, cysteine 120, cysteine 124, cysteine 144, cysteine 147, cysteine 150, and cysteine 154 each contribute to the [4Fe-4S] cluster site. 2 4Fe-4S ferredoxin-type domains span residues 105 to 134 (KVAF…GGTK) and 135 to 164 (ALHT…MIPV).

The protein belongs to the 4Fe4S bacterial-type ferredoxin family. RnfB subfamily. In terms of assembly, the complex is composed of six subunits: RnfA, RnfB, RnfC, RnfD, RnfE and RnfG. Requires [4Fe-4S] cluster as cofactor.

The protein localises to the cell inner membrane. Part of a membrane-bound complex that couples electron transfer with translocation of ions across the membrane. This is Ion-translocating oxidoreductase complex subunit B from Aliivibrio fischeri (strain ATCC 700601 / ES114) (Vibrio fischeri).